A 291-amino-acid polypeptide reads, in one-letter code: Glycine--tRNA ligase alpha subunit (291 aa).

This sequence belongs to the class-II aminoacyl-tRNA synthetase family. Tetramer of two alpha and two beta subunits.

The protein resides in the cytoplasm. It carries out the reaction tRNA(Gly) + glycine + ATP = glycyl-tRNA(Gly) + AMP + diphosphate. The protein is Glycine--tRNA ligase alpha subunit of Nitratidesulfovibrio vulgaris (strain DSM 19637 / Miyazaki F) (Desulfovibrio vulgaris).